Reading from the N-terminus, the 70-residue chain is DNA-directed RNA polymerase subunit epsilon (70 aa).

The protein belongs to the RNA polymerase subunit epsilon family. As to quaternary structure, RNAP is composed of a core of 2 alpha, a beta and a beta' subunit. The core is associated with a delta subunit, and at least one of epsilon or omega. When a sigma factor is associated with the core the holoenzyme is formed, which can initiate transcription.

It catalyses the reaction RNA(n) + a ribonucleoside 5'-triphosphate = RNA(n+1) + diphosphate. A non-essential component of RNA polymerase (RNAP). The chain is DNA-directed RNA polymerase subunit epsilon from Bacillus cereus (strain ATCC 14579 / DSM 31 / CCUG 7414 / JCM 2152 / NBRC 15305 / NCIMB 9373 / NCTC 2599 / NRRL B-3711).